We begin with the raw amino-acid sequence, 238 residues long: Ubiquinone biosynthesis O-methyltransferase (238 aa).

Residues Arg39, Gly59, Asp80, and Met124 each coordinate S-adenosyl-L-methionine.

The protein belongs to the methyltransferase superfamily. UbiG/COQ3 family.

The enzyme catalyses a 3-demethylubiquinol + S-adenosyl-L-methionine = a ubiquinol + S-adenosyl-L-homocysteine + H(+). The catalysed reaction is a 3-(all-trans-polyprenyl)benzene-1,2-diol + S-adenosyl-L-methionine = a 2-methoxy-6-(all-trans-polyprenyl)phenol + S-adenosyl-L-homocysteine + H(+). The protein operates within cofactor biosynthesis; ubiquinone biosynthesis. O-methyltransferase that catalyzes the 2 O-methylation steps in the ubiquinone biosynthetic pathway. The sequence is that of Ubiquinone biosynthesis O-methyltransferase from Aeromonas salmonicida (strain A449).